Here is a 174-residue protein sequence, read N- to C-terminus: Keratin-associated protein 1-5 (174 aa).

Residues 3–172 (CCQTSFCGYP…CCRPVCCCEP (170 aa)) form a 15 X 5 AA repeats of C-C-[QEPVRC]-[TPIVLE]-[SRHVP] region.

This sequence belongs to the KRTAP type 1 family. Interacts with hair keratins. In terms of tissue distribution, expressed in the middle/upper portions of the hair cortex, in the region termed the keratogenous zone.

In the hair cortex, hair keratin intermediate filaments are embedded in an interfilamentous matrix, consisting of hair keratin-associated proteins (KRTAP), which are essential for the formation of a rigid and resistant hair shaft through their extensive disulfide bond cross-linking with abundant cysteine residues of hair keratins. The matrix proteins include the high-sulfur and high-glycine-tyrosine keratins. The sequence is that of Keratin-associated protein 1-5 (KRTAP1-5) from Homo sapiens (Human).